The primary structure comprises 344 residues: Putative voltage-gated potassium channel subunit beta (344 aa).

NADP(+) contacts are provided by W33, D62, Y67, S167, Q193, W222, S223, P224, L225, K233, R243, G301, S303, Q307, E310, and N311. Y67 functions as the Proton donor/acceptor in the catalytic mechanism.

This sequence belongs to the shaker potassium channel beta subunit family. In terms of assembly, forms heteromultimeric complexes with potassium channel alpha subunits.

It is found in the cytoplasm. It localises to the nucleus. Its function is as follows. Probable accessory potassium channel protein which modulates the activity of the pore-forming alpha subunit. The protein is Putative voltage-gated potassium channel subunit beta of Schizosaccharomyces pombe (strain 972 / ATCC 24843) (Fission yeast).